Reading from the N-terminus, the 324-residue chain is HTH-type transcriptional regulator GlxA (324 aa).

In terms of domain architecture, HTH araC/xylS-type spans 223-321; that stretch reads LAVLEKMETA…SQTPGSLRRR (99 aa). 2 DNA-binding regions (H-T-H motif) span residues 240 to 261 and 288 to 311; these read TAMA…REHR and IPEI…KRLF.

The chain is HTH-type transcriptional regulator GlxA (glxA) from Rhizobium meliloti (strain 1021) (Ensifer meliloti).